We begin with the raw amino-acid sequence, 286 residues long: Translocon-associated protein subunit alpha (286 aa).

The N-terminal stretch at 1 to 23 (MRVLPRLLLLLLLAFPAAVLLRG) is a signal peptide. At 24-207 (GPGGSLVAAQ…EREDGLDGET (184 aa)) the chain is on the lumenal side. The span at 37 to 75 (EDEETVEDSIIEDEDDEAEVEEDEPTDLAEDKEEEDVSG) shows a compositional bias: acidic residues. Residues 37–83 (EDEETVEDSIIEDEDDEAEVEEDEPTDLAEDKEEEDVSGEPEASPSA) are disordered. Asparagine 136 and asparagine 191 each carry an N-linked (GlcNAc...) asparagine glycan. A helical transmembrane segment spans residues 208-228 (IFMYMFLAGLGLLVVVGLHQL). Residues 229–286 (LESRKRKRPIQKVEMGTSSQNDVDMSWIPQETLNQINKASPRRLPRKRAQKRSVGSDE) lie on the Cytoplasmic side of the membrane. Serine 247 is modified (phosphoserine). Phosphothreonine is present on threonine 260. The interval 261–286 (LNQINKASPRRLPRKRAQKRSVGSDE) is disordered. Residue serine 268 is modified to Phosphoserine. The span at 268 to 279 (SPRRLPRKRAQK) shows a compositional bias: basic residues.

It belongs to the TRAP-alpha family. Heterotetramer of TRAP-alpha, TRAP-beta, TRAP-delta and TRAP-gamma. Interacts with palmitoylated calnexin (CALX), the interaction is required for efficient folding of glycosylated proteins. Post-translationally, phosphorylated in its cytoplasmic tail.

The protein resides in the endoplasmic reticulum membrane. In terms of biological role, TRAP proteins are part of a complex whose function is to bind calcium to the ER membrane and thereby regulate the retention of ER resident proteins. May be involved in the recycling of the translocation apparatus after completion of the translocation process or may function as a membrane-bound chaperone facilitating folding of translocated proteins. This chain is Translocon-associated protein subunit alpha (SSR1), found in Canis lupus familiaris (Dog).